A 267-amino-acid polypeptide reads, in one-letter code: Diphthine--ammonia ligase (267 aa).

The residue at position 97 (Tyr-97) is a Phosphotyrosine.

The protein belongs to the Diphthine--ammonia ligase family.

It catalyses the reaction diphthine-[translation elongation factor 2] + NH4(+) + ATP = diphthamide-[translation elongation factor 2] + AMP + diphosphate + H(+). It participates in protein modification; peptidyl-diphthamide biosynthesis. Functionally, amidase that catalyzes the last step of diphthamide biosynthesis using ammonium and ATP. Diphthamide biosynthesis consists in the conversion of an L-histidine residue in the translation elongation factor eEF-2 (EEF2) to diphthamide. This Bos taurus (Bovine) protein is Diphthine--ammonia ligase (DPH6).